The sequence spans 199 residues: Probable molybdenum cofactor guanylyltransferase (199 aa).

GTP is bound by residues 6-8, lysine 18, aspartate 65, and aspartate 97; that span reads LAG. Aspartate 97 contributes to the Mg(2+) binding site.

This sequence belongs to the MobA family. The cofactor is Mg(2+).

The protein resides in the cytoplasm. It catalyses the reaction Mo-molybdopterin + GTP + H(+) = Mo-molybdopterin guanine dinucleotide + diphosphate. Its function is as follows. Transfers a GMP moiety from GTP to Mo-molybdopterin (Mo-MPT) cofactor (Moco or molybdenum cofactor) to form Mo-molybdopterin guanine dinucleotide (Mo-MGD) cofactor. The chain is Probable molybdenum cofactor guanylyltransferase from Staphylococcus aureus (strain COL).